The following is a 146-amino-acid chain: Acidic phospholipase A2 S5-32M (146 aa).

The first 19 residues, 1-19 (MYPAHLLVLLAVCVSLLGA), serve as a signal peptide directing secretion. Positions 20–27 (ASIPPQPL) are excised as a propeptide. Intrachain disulfides connect C38–C98, C54–C145, C56–C72, C71–C126, C78–C119, C87–C112, and C105–C117. Y55, G57, and G59 together coordinate Ca(2+). H75 is a catalytic residue. Position 76 (D76) interacts with Ca(2+). D120 is a catalytic residue.

The protein belongs to the phospholipase A2 family. Group I subfamily. D49 sub-subfamily. It depends on Ca(2+) as a cofactor. In terms of tissue distribution, expressed by the venom gland.

Its subcellular location is the secreted. It carries out the reaction a 1,2-diacyl-sn-glycero-3-phosphocholine + H2O = a 1-acyl-sn-glycero-3-phosphocholine + a fatty acid + H(+). Functionally, snake venom phospholipase A2 (PLA2) that inhibits collagen-induced platelet aggregation. PLA2 catalyzes the calcium-dependent hydrolysis of the 2-acyl groups in 3-sn-phosphoglycerides. This chain is Acidic phospholipase A2 S5-32M, found in Austrelaps superbus (Lowland copperhead snake).